A 229-amino-acid chain; its full sequence is 7-cyano-7-deazaguanine synthase (229 aa).

Residue 7 to 17 (LSGGLDSSTIL) coordinates ATP. Zn(2+) contacts are provided by cysteine 191, cysteine 199, cysteine 202, and cysteine 205.

Belongs to the QueC family. The cofactor is Zn(2+).

It carries out the reaction 7-carboxy-7-deazaguanine + NH4(+) + ATP = 7-cyano-7-deazaguanine + ADP + phosphate + H2O + H(+). It participates in purine metabolism; 7-cyano-7-deazaguanine biosynthesis. In terms of biological role, catalyzes the ATP-dependent conversion of 7-carboxy-7-deazaguanine (CDG) to 7-cyano-7-deazaguanine (preQ(0)). The protein is 7-cyano-7-deazaguanine synthase of Nostoc sp. (strain PCC 7120 / SAG 25.82 / UTEX 2576).